The chain runs to 187 residues: Decorin-binding protein B (187 aa).

The signal sequence occupies residues 1–20 (MKIGKLNSIVMVLFFDLLVA).

It belongs to the decorin-binding protein family.

Its function is as follows. Binds to decorin which may mediate the adherence of B.burgdorferi to collagen fibers in skin and other tissues. The polypeptide is Decorin-binding protein B (dbpB) (Borreliella burgdorferi (strain N40) (Borrelia burgdorferi)).